The chain runs to 300 residues: D-alanine--D-alanine ligase (300 aa).

The 195-residue stretch at 99-293 (KKILKYANIN…FAELLNSIVK (195 aa)) folds into the ATP-grasp domain. 126 to 181 (IEKIGYPVFVKPNSGGSSVATNLVKDKEGIKEAVELALKYDKEVMIENYTKGEEIT) is a binding site for ATP. Mg(2+) contacts are provided by D248, E260, and N262.

The protein belongs to the D-alanine--D-alanine ligase family. Mg(2+) is required as a cofactor. The cofactor is Mn(2+).

The protein localises to the cytoplasm. It catalyses the reaction 2 D-alanine + ATP = D-alanyl-D-alanine + ADP + phosphate + H(+). It participates in cell wall biogenesis; peptidoglycan biosynthesis. Its function is as follows. Cell wall formation. In Clostridium botulinum (strain Okra / Type B1), this protein is D-alanine--D-alanine ligase.